Consider the following 95-residue polypeptide: MSVDLATVKRVAHLARIAVSEDEANRMVGELNGILGFVEQLSEVNVDGVEAMTSVTPMAMKKRTDEVTDGSKAADIVANAPVTDHNFFLVPKVVE.

Belongs to the GatC family. In terms of assembly, heterotrimer of A, B and C subunits.

The catalysed reaction is L-glutamyl-tRNA(Gln) + L-glutamine + ATP + H2O = L-glutaminyl-tRNA(Gln) + L-glutamate + ADP + phosphate + H(+). The enzyme catalyses L-aspartyl-tRNA(Asn) + L-glutamine + ATP + H2O = L-asparaginyl-tRNA(Asn) + L-glutamate + ADP + phosphate + 2 H(+). Its function is as follows. Allows the formation of correctly charged Asn-tRNA(Asn) or Gln-tRNA(Gln) through the transamidation of misacylated Asp-tRNA(Asn) or Glu-tRNA(Gln) in organisms which lack either or both of asparaginyl-tRNA or glutaminyl-tRNA synthetases. The reaction takes place in the presence of glutamine and ATP through an activated phospho-Asp-tRNA(Asn) or phospho-Glu-tRNA(Gln). The polypeptide is Aspartyl/glutamyl-tRNA(Asn/Gln) amidotransferase subunit C (Rhizobium leguminosarum bv. trifolii (strain WSM2304)).